A 304-amino-acid chain; its full sequence is Nod factor export ATP-binding protein I (304 aa).

The region spanning 6-236 is the ABC transporter domain; the sequence is IEFDKVKKSY…EIGCDVIEIF (231 aa). Residue 38–45 participates in ATP binding; it reads GPNGAGKT.

Belongs to the ABC transporter superfamily. Lipooligosaccharide exporter (TC 3.A.1.102) family. The complex is composed of two ATP-binding proteins (NodI) and two transmembrane proteins (NodJ).

The protein resides in the cell inner membrane. Part of the ABC transporter complex NodIJ involved in the export of the nodulation factors (Nod factors), the bacterial signal molecules that induce symbiosis and subsequent nodulation induction. Nod factors are LCO (lipo-chitin oligosaccharide), a modified beta-1,4-linked N-acetylglucosamine oligosaccharide. This subunit is responsible for energy coupling to the transport system. In Paraburkholderia xenovorans (strain LB400), this protein is Nod factor export ATP-binding protein I.